Consider the following 383-residue polypeptide: Paralemmin-1 (383 aa).

Met1 carries the post-translational modification N-acetylmethionine. A coiled-coil region spans residues 7–101 (DTVSQQERLQ…EKEIDVLEFG (95 aa)). Disordered stretches follow at residues 51–164 (RERW…STMM), 242–293 (TLSE…QPGQ), and 333–374 (SVTP…DMKK). Over residues 69-96 (DMRKQMQEDEQKARSLEESITRLEKEID) the composition is skewed to basic and acidic residues. Ser116, Ser122, and Ser124 each carry phosphoserine. A compositionally biased stretch (polar residues) spans 133–143 (ETMVNAQQTPL). Phosphothreonine is present on residues Thr141, Thr145, and Thr153. Ser157 and Ser161 each carry phosphoserine. Residue Thr242 is modified to Phosphothreonine. A Phosphoserine modification is found at Ser244. Basic and acidic residues predominate over residues 257–273 (GLAEDVTRTTPSRREIT). Phosphoserine is present on Ser345. Over residues 357 to 367 (QTGPTTTPSDT) the composition is skewed to polar residues. Phosphothreonine is present on residues Thr361, Thr362, and Thr363. The residue at position 365 (Ser365) is a Phosphoserine. Thr367 carries the phosphothreonine modification. Residues Cys377 and Cys379 are each lipidated (S-palmitoyl cysteine). The residue at position 380 (Cys380) is a Cysteine methyl ester. Cys380 carries the S-farnesyl cysteine lipid modification. Residues 381 to 383 (SVM) constitute a propeptide, removed in mature form.

The protein belongs to the paralemmin family. As to quaternary structure, interacts with dopamine receptor DRD3. As to expression, expressed in neurons cells of neuropil-rich areas of the brain, in the Purkinje cells of the cerebellum, in cells of the cerebral cortex, hippocampus, brainstem nuclei and glial processes and sheaths. Expressed in the medulla of the adrenal chromaffin cells and renal duct cells (at protein level).

Its subcellular location is the cell membrane. The protein localises to the cell projection. It is found in the filopodium membrane. The protein resides in the axon. It localises to the dendrite. Its subcellular location is the dendritic spine. The protein localises to the basolateral cell membrane. It is found in the apicolateral cell membrane. Its function is as follows. Involved in plasma membrane dynamics and cell process formation. Necessary for axonal and dendritic filopodia induction, for dendritic spine maturation and synapse formation in a palmitoylation-dependent manner. The sequence is that of Paralemmin-1 (Palm) from Rattus norvegicus (Rat).